The sequence spans 495 residues: ATP synthase subunit beta (495 aa).

Position 178–185 (178–185 (GGAGVGKT)) interacts with ATP.

The protein belongs to the ATPase alpha/beta chains family. As to quaternary structure, F-type ATPases have 2 components, CF(1) - the catalytic core - and CF(0) - the membrane proton channel. CF(1) has five subunits: alpha(3), beta(3), gamma(1), delta(1), epsilon(1). CF(0) has three main subunits: a(1), b(2) and c(9-12). The alpha and beta chains form an alternating ring which encloses part of the gamma chain. CF(1) is attached to CF(0) by a central stalk formed by the gamma and epsilon chains, while a peripheral stalk is formed by the delta and b chains.

It localises to the cell membrane. The enzyme catalyses ATP + H2O + 4 H(+)(in) = ADP + phosphate + 5 H(+)(out). Its function is as follows. Produces ATP from ADP in the presence of a proton gradient across the membrane. The catalytic sites are hosted primarily by the beta subunits. This chain is ATP synthase subunit beta, found in Bifidobacterium animalis subsp. lactis (strain AD011).